We begin with the raw amino-acid sequence, 1035 residues long: NACHT, LRR and PYD domains-containing protein 3 (1035 aa).

In terms of domain architecture, Pyrin spans 1-93; sequence MKMMSVRCKL…WEKAKKDQPE (93 aa). At Ser-5 the chain carries Phosphoserine. An intrachain disulfide couples Cys-8 to Cys-106. A Phosphotyrosine modification is found at Tyr-13. Cys-128 carries S-palmitoyl cysteine lipidation. The required for binding to phosphatidylinositol 4-phosphate (PtdIns4P) stretch occupies residues 129–132; that stretch reads KKKK. Phosphotyrosine is present on residues Tyr-134 and Tyr-138. Residues 138–208 form the FISNA domain; sequence YRRHVRSRFY…SSLKLELLFE (71 aa). Residue Ser-159 is modified to Phosphoserine. At Tyr-166 the chain carries Phosphotyrosine. Position 167 (Thr-167) interacts with ATP. Phosphoserine is present on Ser-199. Residues 218-534 form the NACHT domain; the sequence is HTVVFQGAAG…EFFAAMYYLL (317 aa). An ATP-binding site is contributed by 224–231; it reads GAAGIGKT. Phosphoserine is present on residues Ser-263 and Ser-293. Lys-322 is covalently cross-linked (Glycyl lysine isopeptide (Lys-Gly) (interchain with G-Cter in ubiquitin)). Ser-332 is subject to Phosphoserine. The KFERQ-like motif 1 motif lies at 353-357; that stretch reads LEKLQ. A Glycyl lysine isopeptide (Lys-Gly) (interchain with G-Cter in ubiquitin) cross-link involves residue Lys-428. His-520 is a binding site for ATP. Residues 603–607 carry the KFERQ-like motif 2 motif; sequence QVRLE. Residue Lys-689 forms a Glycyl lysine isopeptide (Lys-Gly) (interchain with G-Cter in ubiquitin) linkage. Residues Ser-727 and Ser-734 each carry the phosphoserine modification. 5 LRR repeats span residues 741-761, 770-791, 798-818, 827-848, and 855-875; these read SLTELDLSDNTLGDPGMRVLC, NIQRLWLGRCGLTHQCCFNISS, KLVELDLSDNALGDFGVRLLC, NLQKLWLVSCCLTSACCQDLAL, and SLTRLYIGENALGDSGVQVLC. The KFERQ-like motif 3 motif lies at 797–801; that stretch reads QKLVE. Position 805 is a phosphoserine (Ser-805). 3 S-palmitoyl cysteine lipidation sites follow: Cys-836, Cys-837, and Cys-843. Tyr-860 is modified (phosphotyrosine). Residue Lys-877 forms a Glycyl lysine isopeptide (Lys-Gly) (interchain with G-Cter in ubiquitin) linkage. LRR repeat units lie at residues 884–905, 912–932, 941–962, and 969–990; these read NLQKLGLVNSGLTSLCCSALTS, NLTHLYLRSNALGDMGLKLLC, KLQMLELDNCSLTSHSCWDLST, and SLRKLNLSNNDLGDLCVVTLCE. Residue Cys-957 is the site of S-palmitoyl cysteine attachment. Lys-972 is covalently cross-linked (Glycyl lysine isopeptide (Lys-Gly) (interchain with G-Cter in ubiquitin)). A KFERQ-like motif 4 motif is present at residues 990–994; it reads EVLKQ. Position 1034 is a phosphoserine (Ser-1034).

It belongs to the NLRP family. Sensor component of NLRP3 inflammasomes; inflammasomes are supramolecular complexes that assemble in the cytosol in response to pathogens and other damage-associated signals and play critical roles in innate immunity and inflammation. The core of NLRP3 inflammasomes consists of a signal sensor component (NLRP3), an adapter (PYCARD/ASC), which recruits an effector pro-inflammatory caspase (CASP1 and, possibly, CASP4 and CASP5). Homodecamer; inactive NLRP3 forms homodecameric double-ring cages that hide pyrin domains within NACHT-LRR rings to avoid premature activation. Interacts (via pyrin domain) with PYCARD/ASC (via pyrin domain); interaction is direct. Interacts (via LRR repeat domain) with NEK7 (via N-terminus); the interaction is required for the formation of the complex NLRP3:PYCARD, oligomerization of PYCARD/ASC and activation of CASP1. Interacts (via LRR repeat domain) with NR4A1/Nur77 (via N-terminus); the interaction is direct, requires activation of NR4A1 by its ligands NBRE-containing dsDNA and lipopolysaccharide, and stimulates the association of NLRP3 with NEK7 for non-canonical NLRP3 inflammasome activation. Interacts with CARD8; leading to inhibit formation of the NLRP3 inflammasome. Interacts with MEFV; this interaction targets NLRP3 to degradation by autophagy, hence preventing excessive IL1B- and IL18-mediated inflammation. Interacts with EIF2AK2/PKR; this interaction requires EIF2AK2 activity, is accompanied by EIF2AK2 autophosphorylation and promotes inflammasome assembly in response to specific stimuli. Interacts with GBP5 (via DAPIN domain); this interaction promotes inflammasome assembly in response to microbial and soluble, but not crystalline, agents. Interacts with PML (isoform PML-1) (via the leucine-rich repeat (LRR) domain); PML-mediated increase in NLRP3 inflammasome activation does not depend upon this interaction. Interacts (via NACHT domain) with DHX33 (via DEAH box); NLRP3 activation in presence of cytosolic dsRNA is mediated by DHX33. Interacts (via NACHT and LRR domains) with ARRB2; this interaction is direct and inducible by polyunsaturated fatty acids (PUFAs). Interacts (via NACHT domain) with DDX3X under both LPS-primed and inflammasome-activating conditions. Interacts with IRF4 (via the LRR domain); this interaction is direct and is required for optimal IRF4 binding to IL4 promoter and efficient IL4 transactivation during differentiation of Th2 helper T-cells. Interacts with MAVS; promoting localization to mitochondria and activation of the NLRP3 inflammasome. Interacts with MARK4; promoting localization of NLRP3 to the microtubule organizing center (MTOC). Interacts with TRIM50; this interaction also promotes NLRP3 oligomerization and subsequent inflammasome activation. Interacts with IRGM; preventing NLRP3 inflammasome assembly and promoting NLRP3 degradation. Interacts (via NACHT and LLR domains) with ABHD8; this interaction is enhanced in the presence of NLRP3 inflammasome inducers, such as ATP, nigericin, silica, or alum. Interaction with ABHD8 leads the recruitment of ZDHHC12, hence facilitating NLRP3 palmitoylation and degradation by the chaperone-mediated autophagy pathway (CMA), therefore attenuating NLRP3 inflammasome activation. In terms of processing, phosphorylation by MAPK8/JNK1 increases inflammasome activation by promoting deubiquitination by BRCC3 and NLRP3 homooligomerization. Phosphorylation at Ser-805 by CSNK1A1 prevents inflammasome activation by preventing NEK7 recruitment. Phosphorylation at Ser-5 in the pyrin domain inhibits homomultimerization of NLRP3 and activation of the NLRP3 inflammasome: dephosphorylation by protein phosphatase 2A (PP2A) promotes assembly of the NLRP3 inflammasome. Phosphorylation at Ser-293 by PKD/PRKD1 promotes NLRP3 inflammasome assembly. Phosphorylation by ERK1/MAPK3 promotes NLRP3 inflammasome assembly. Phosphorylation by BTK (at Tyr-134, Tyr-138 and Tyr-166) in the region that mediates binding to phosphatidylinositol phosphate, promotes relocalization of NLRP3 and assembly of the NLRP3 inflammasome. Phosphorylation at Tyr-860 inhibits NLRP3 inflammasome assembly: dephosphorylation by PTPN22 promotes inflammasome activation. Phosphorylated by LATS1 and LATS2 at Ser-263 following palmitoylation by ZDHHC1, promoting its relocalization to the microtubule organizing center (MTOC), where NLRP3 is activated by NEK7, leading to inflammasome assembly and activation. Ubiquitinated; undergoes both 'Lys-48'- and 'Lys-63'-linked polyubiquitination. Ubiquitination does not lead to degradation, but inhibits inflammasome activation. Deubiquitination is catalyzed by BRCC3 and associated with NLRP3 activation and inflammasome assembly. This process can be induced by the activation of Toll-like receptors (by LPS), through a non-transcriptional pathway dependent on the mitochondrial production of reactive oxygen species, and by ATP. Ubiquitinated by TRIM31 via 'Lys-48'-linked ubiquitination, leading to its degradation by the proteasome. Ubiquitinated at Lys-689 by the SCF(FBXL2) complex, leading to its degradation by the proteasome. Ubiquitinated by TRIM35 via 'lys-48' and 'Lys-63'-linked ubiquitination leading to inhibition of NLRP3 inflammasome activation. Undergoes 'Lys-27'-linked polyubiquitination by MARCHF5, leading to NLRP3-NEK7 complex formation and NLRP3 oligomerization. Post-translationally, the disulfide bond in the pyrin domain might play a role in reactive oxygen species-mediated activation. In terms of processing, palmitoylation by ZDHHC12 promotes NLRP3 degradation by the chaperone-mediated autophagy pathway (CMA) and therefore limits NLRP3 inflammasome activation. Interaction with ZDHHC12, and hence NLRP3 palmitoylation, is greatly enhanced by ABHD8. Following palmitoylation, HSPA8/HSC70 recognizes and binds the KFERQ-like motifs on NLRP3 and promotes NLRP3 recruitment to lysosomes, where it is degraded via the chaperone-mediated autophagy pathway in a LAMP2-dependent process. Palmitoylation at Cys-836 and Cys-837 by ZDHHC5 enhances its binding to NEK7 leading to inflammasome assembly and activation. Palmitoylation at Cys-128 and Cys-957 by ZDHHC1 facilitates phosphorylation at Ser-263 by LATS1 and LATS2, promoting its relocalization to the microtubule organizing center (MTOC), where NLRP3 is activated by NEK7, leading to inflammasome assembly and activation. Depalmitoylated by ABHD17A. Degraded via selective autophagy following interaction with IRGM. IRGM promotes NLRP3 recruitment to autophagosome membranes, promoting its SQSTM1/p62-dependent autophagy-dependent degradation.

The protein resides in the cytoplasm. It localises to the cytosol. The protein localises to the inflammasome. Its subcellular location is the cytoskeleton. It is found in the microtubule organizing center. The protein resides in the golgi apparatus membrane. It localises to the endoplasmic reticulum. The protein localises to the mitochondrion. Its subcellular location is the secreted. It is found in the nucleus. It carries out the reaction ATP + H2O = ADP + phosphate + H(+). Under resting conditions, NLRP3 binds ADP and is autoinhibited. Inactive NLRP3 forms homodecameric double-ring cages that hide pyrin domains within NACHT-LRR rings to avoid premature activation. NLRP3 activation stimuli include extracellular ATP, nigericin, reactive oxygen species, crystals of monosodium urate or cholesterol, amyloid-beta fibers, environmental or industrial particles and nanoparticles, such as asbestos, silica, aluminum salts, cytosolic dsRNA, etc. Almost all stimuli trigger intracellular K(+) efflux. These stimuli lead to membrane perturbations that induce activation of NLRP3. Upon activation, NLRP3 is transported to microtubule organizing center (MTOC), where it is unlocked by NEK7, leading to its relocalization to dispersed trans-Golgi network (dTGN) vesicle membranes and recruitment of PYCARD/ASC for the formation of an active inflammasome complex. NEK7-activated NLRP3 forms a disk-shaped inflammasome. NLRP3 and PYCARD/ASC interact via their respective pyrin domains; interaction initiates speck formation (nucleation) which greatly enhances further addition of soluble PYCARD/ASC molecules to the speck in a prion-like polymerization process. Clustered PYCARD/ASC nucleates the formation of CASP1 filaments through the interaction of their respective CARD domains, acting as a platform for CASP1 polymerization and activation. Active CASP1 then processes IL1B and IL18 precursors, leading to the release of mature cytokines in the extracellular milieu and inflammatory response. NLRP3 inflammasome assembly is inhibited by IRGM, which impedes NLRP3 oligomerization. NLRP3 inflammasome is inhibited by cyclic AMP (cAMP), which directly binds NLRP3; inhibition is relieved by calcium-sensing receptor CASR, which inhibits production of cAMP. Specifically inhibited by sulfonylurea MCC950 (also named CP-456,773, CRID3), a potent and specific small-molecule inhibitor of the NLRP3 inflammasome that acts by preventing ATP hydrolysis. Functionally, sensor component of the NLRP3 inflammasome, which mediates inflammasome activation in response to defects in membrane integrity, leading to secretion of inflammatory cytokines IL1B and IL18 and pyroptosis. In response to pathogens and other damage-associated signals that affect the integrity of membranes, initiates the formation of the inflammasome polymeric complex composed of NLRP3, CASP1 and PYCARD/ASC. Recruitment of pro-caspase-1 (proCASP1) to the NLRP3 inflammasome promotes caspase-1 (CASP1) activation, which subsequently cleaves and activates inflammatory cytokines IL1B and IL18 and gasdermin-D (GSDMD), promoting cytokine secretion and pyroptosis. Activation of NLRP3 inflammasome is also required for HMGB1 secretion; stimulating inflammatory responses. Under resting conditions, ADP-bound NLRP3 is autoinhibited. NLRP3 activation stimuli include extracellular ATP, nigericin, reactive oxygen species, crystals of monosodium urate or cholesterol, amyloid-beta fibers, environmental or industrial particles and nanoparticles, such as asbestos, silica, aluminum salts, cytosolic dsRNA, etc. Almost all stimuli trigger intracellular K(+) efflux. These stimuli lead to membrane perturbation and activation of NLRP3. Upon activation, NLRP3 is transported to microtubule organizing center (MTOC), where it is unlocked by NEK7, leading to its relocalization to dispersed trans-Golgi network (dTGN) vesicle membranes and formation of an active inflammasome complex. Associates with dTGN vesicle membranes by binding to phosphatidylinositol 4-phosphate (PtdIns4P). Shows ATPase activity. Its function is as follows. Independently of inflammasome activation, regulates the differentiation of T helper 2 (Th2) cells and has a role in Th2 cell-dependent asthma and tumor growth. During Th2 differentiation, required for optimal IRF4 binding to IL4 promoter and for IRF4-dependent IL4 transcription. Binds to the consensus DNA sequence 5'-GRRGGNRGAG-3'. May also participate in the transcription of IL5, IL13, GATA3, CCR3, CCR4 and MAF. This chain is NACHT, LRR and PYD domains-containing protein 3, found in Rattus norvegicus (Rat).